A 600-amino-acid chain; its full sequence is MPQQNLLILYGSQTGTAEDLAGRLSREAKRHHFNCRTEALDEYRVANLINEHLVIFVCATTGQGDPPDNMKNFWRFIFRRNLPHNALCQMDYAVLGLGDSSYPKFNFIAKKLHKRLNQLGACPLLPAALGDDQHELGPDAVVDPWLKDLWSKVLSMFPLRPGLEIISEDVLLPPKYSLRLLEEKVGQSELSGDAYERDFISNNTTPPSEIHPFLAPVLSNERVSAHDHFQDVRLIEFNITGSAIQFYPGDVVMVQPRNSLLHVEQFCSLLHLDPLNKVVVEPSDPESPVPMHLAALCSVQQLVERYLDICSIPRRSFFQLFCHFSPDEMEREKLKEFSCAAGQEELYSYCNRPRRTILEVLVDFPHTTRCIPATFLLELIPQIRPRAFSIASSMEALPNTIQILMAVVQYKTKLIEPRRGLCSTWLASLPPHGTERVPIWVKKGSMKFPCDPDTPVVMVGPGTGVAPFRAAIQERVANGRPGNCLFFGCRGKSKDFYFEKEWEDLGNRGYLTLFTAFSRDQEDKIYVQHRIKENSKLLWDLIGTKQGYVYIAGNAKLMPNEVTDALKWVLQLEGGMSAPDAEQYLASMEKSCRFQSETWS.

The 145-residue stretch at 6 to 150 (LLILYGSQTG…VVDPWLKDLW (145 aa)) folds into the Flavodoxin-like domain. FMN contacts are provided by residues 12 to 17 (SQTGTA), 59 to 62 (ATTG), 97 to 106 (LGDSSYPKFN), and Asp-132. In terms of domain architecture, FAD-binding FR-type spans 210 to 449 (IHPFLAPVLS…WVKKGSMKFP (240 aa)). Residues Arg-354, 386–389 (RAFS), and 420–423 (GLCS) each bind FAD. NADP(+) contacts are provided by residues Thr-463, 518 to 519 (SR), and 524 to 528 (KIYVQ). Trp-599 is a binding site for FAD.

It belongs to the NADPH-dependent diflavin oxidoreductase NDOR1 family. In the N-terminal section; belongs to the flavodoxin family. The protein in the C-terminal section; belongs to the flavoprotein pyridine nucleotide cytochrome reductase family. As to quaternary structure, interacts with ciapin1; as part of the cytosolic iron-sulfur (Fe-S) protein assembly (CIA) machinery. Requires FAD as cofactor. FMN is required as a cofactor.

It localises to the cytoplasm. Its subcellular location is the perinuclear region. It catalyses the reaction 2 oxidized [2Fe-2S]-[protein] + NADPH = 2 reduced [2Fe-2S]-[protein] + NADP(+) + H(+). NADPH-dependent reductase which is a central component of the cytosolic iron-sulfur (Fe-S) protein assembly (CIA) machinery. Transfers electrons from NADPH via its FAD and FMN prosthetic groups to the [2Fe-2S] cluster of ciapin1, another key component of the CIA machinery. In turn, this reduced cluster provides electrons for assembly of cytosolic iron-sulfur cluster proteins. It can also reduce the [2Fe-2S] cluster of cisd1 and activate this protein implicated in Fe/S cluster repair. In Xenopus laevis (African clawed frog), this protein is NADPH-dependent diflavin oxidoreductase 1.